The following is a 381-amino-acid chain: Queuine tRNA-ribosyltransferase (381 aa).

Asp-92 functions as the Proton acceptor in the catalytic mechanism. Substrate is bound by residues 92-96 (DSGGF), Asp-146, Gln-190, and Gly-217. Residues 248 to 254 (GVGRPED) are RNA binding. Asp-267 serves as the catalytic Nucleophile. Positions 272–276 (TRNAR) are RNA binding; important for wobble base 34 recognition. Zn(2+)-binding residues include Cys-305, Cys-307, Cys-310, and His-337.

This sequence belongs to the queuine tRNA-ribosyltransferase family. As to quaternary structure, homodimer. Within each dimer, one monomer is responsible for RNA recognition and catalysis, while the other monomer binds to the replacement base PreQ1. Zn(2+) is required as a cofactor.

It carries out the reaction 7-aminomethyl-7-carbaguanine + guanosine(34) in tRNA = 7-aminomethyl-7-carbaguanosine(34) in tRNA + guanine. It functions in the pathway tRNA modification; tRNA-queuosine biosynthesis. Catalyzes the base-exchange of a guanine (G) residue with the queuine precursor 7-aminomethyl-7-deazaguanine (PreQ1) at position 34 (anticodon wobble position) in tRNAs with GU(N) anticodons (tRNA-Asp, -Asn, -His and -Tyr). Catalysis occurs through a double-displacement mechanism. The nucleophile active site attacks the C1' of nucleotide 34 to detach the guanine base from the RNA, forming a covalent enzyme-RNA intermediate. The proton acceptor active site deprotonates the incoming PreQ1, allowing a nucleophilic attack on the C1' of the ribose to form the product. After dissociation, two additional enzymatic reactions on the tRNA convert PreQ1 to queuine (Q), resulting in the hypermodified nucleoside queuosine (7-(((4,5-cis-dihydroxy-2-cyclopenten-1-yl)amino)methyl)-7-deazaguanosine). The chain is Queuine tRNA-ribosyltransferase from Xanthomonas campestris pv. campestris (strain B100).